A 244-amino-acid polypeptide reads, in one-letter code: B3 domain-containing protein At2g36080 (244 aa).

A DNA-binding region (TF-B3) is located at residues 38–144 (FEKPLTPSDV…RFFIGWRRRG (107 aa)).

It localises to the nucleus. This Arabidopsis thaliana (Mouse-ear cress) protein is B3 domain-containing protein At2g36080 (ARF31).